The following is a 364-amino-acid chain: DNA replication and repair protein RecF (364 aa).

ATP is bound at residue 30–37 (GNNAQGKT).

The protein belongs to the RecF family.

The protein localises to the cytoplasm. In terms of biological role, the RecF protein is involved in DNA metabolism; it is required for DNA replication and normal SOS inducibility. RecF binds preferentially to single-stranded, linear DNA. It also seems to bind ATP. This Clostridium botulinum (strain ATCC 19397 / Type A) protein is DNA replication and repair protein RecF.